Reading from the N-terminus, the 473-residue chain is Siroheme synthase (473 aa).

The interval 1–203 is precorrin-2 dehydrogenase /sirohydrochlorin ferrochelatase; the sequence is MNYLPIFIDL…GNKEQAINVL (203 aa). Residues 22–23 and 43–44 contribute to the NAD(+) site; these read EV and KE. Ser128 carries the phosphoserine modification. The segment at 215–473 is uroporphyrinogen-III C-methyltransferase; that stretch reads GEIILVGAGP…KNKFSTLTFI (259 aa). S-adenosyl-L-methionine is bound at residue Pro224. Asp247 (proton acceptor) is an active-site residue. The active-site Proton donor is the Lys269. S-adenosyl-L-methionine is bound by residues 300-302, Ile305, Met382, and Gly411; that span reads GGD.

It in the N-terminal section; belongs to the precorrin-2 dehydrogenase / sirohydrochlorin ferrochelatase family. This sequence in the C-terminal section; belongs to the precorrin methyltransferase family.

The catalysed reaction is uroporphyrinogen III + 2 S-adenosyl-L-methionine = precorrin-2 + 2 S-adenosyl-L-homocysteine + H(+). The enzyme catalyses precorrin-2 + NAD(+) = sirohydrochlorin + NADH + 2 H(+). It catalyses the reaction siroheme + 2 H(+) = sirohydrochlorin + Fe(2+). The protein operates within cofactor biosynthesis; adenosylcobalamin biosynthesis; precorrin-2 from uroporphyrinogen III: step 1/1. It participates in cofactor biosynthesis; adenosylcobalamin biosynthesis; sirohydrochlorin from precorrin-2: step 1/1. Its pathway is porphyrin-containing compound metabolism; siroheme biosynthesis; precorrin-2 from uroporphyrinogen III: step 1/1. It functions in the pathway porphyrin-containing compound metabolism; siroheme biosynthesis; siroheme from sirohydrochlorin: step 1/1. The protein operates within porphyrin-containing compound metabolism; siroheme biosynthesis; sirohydrochlorin from precorrin-2: step 1/1. Functionally, multifunctional enzyme that catalyzes the SAM-dependent methylations of uroporphyrinogen III at position C-2 and C-7 to form precorrin-2 via precorrin-1. Then it catalyzes the NAD-dependent ring dehydrogenation of precorrin-2 to yield sirohydrochlorin. Finally, it catalyzes the ferrochelation of sirohydrochlorin to yield siroheme. The chain is Siroheme synthase from Buchnera aphidicola subsp. Acyrthosiphon pisum (strain APS) (Acyrthosiphon pisum symbiotic bacterium).